The chain runs to 339 residues: Senescence-specific cysteine protease SAG39 (339 aa).

Positions 1–23 (MAMAKALLFAILGCLCLCSAVLA) are cleaved as a signal peptide. 3 disulfides stabilise this stretch: Cys144/Cys187, Cys178/Cys220, and Cys276/Cys328. Cys147 is a catalytic residue. Catalysis depends on residues His282 and Asn303.

This sequence belongs to the peptidase C1 family. As to expression, low expression in mature leaves.

Its subcellular location is the vacuole. Functionally, cysteine protease that may have a developmental senescence specific cell death function during apoptosis, heavy metal detoxification, and hypersensitive response. The protein is Senescence-specific cysteine protease SAG39 of Oryza sativa subsp. japonica (Rice).